A 276-amino-acid chain; its full sequence is Undecaprenyl-diphosphatase 1 (276 aa).

The next 5 helical transmembrane spans lie at 85-105 (MNVV…EKTI), 108-128 (VLFA…VILW), 187-207 (VATE…TLYE), 217-237 (VDSI…AFAC), and 253-273 (FAWY…SGWI).

The protein belongs to the UppP family.

Its subcellular location is the cell inner membrane. It catalyses the reaction di-trans,octa-cis-undecaprenyl diphosphate + H2O = di-trans,octa-cis-undecaprenyl phosphate + phosphate + H(+). Functionally, catalyzes the dephosphorylation of undecaprenyl diphosphate (UPP). Confers resistance to bacitracin. The sequence is that of Undecaprenyl-diphosphatase 1 from Burkholderia thailandensis (strain ATCC 700388 / DSM 13276 / CCUG 48851 / CIP 106301 / E264).